The following is a 104-amino-acid chain: Conantokin-P (104 aa).

A signal peptide spans 1-26 (MQLYTYLYLLVPLVTFHLILSTGTLA). A propeptide spanning residues 27-80 (HGGTLTERRSTDTTALKPEPVLLQKSDARSTDDNDKDRLTQMKRILKKRGNKAR) is cleaved from the precursor. Residues 29–87 (GTLTERRSTDTTALKPEPVLLQKSDARSTDDNDKDRLTQMKRILKKRGNKARGEEEHSK) form a disordered region. Residues 52–66 (SDARSTDDNDKDRLT) are compositionally biased toward basic and acidic residues. Residues Glu83, Glu84, Glu90, Glu94, and Glu103 each carry the 4-carboxyglutamate modification. The a divalent metal cation site is built by Glu90 and Glu94. A disulfide bridge links Cys91 with Cys104.

Belongs to the conotoxin B superfamily. Expressed by the venom duct.

The protein localises to the secreted. Functionally, conantokins inhibit N-methyl-D-aspartate (NMDA) receptors. This toxin has the highest potency for the NR2B/GRIN2B subunit, followed by NR2A/GRIN2A, NR2C/GRIN2C, and NR2D/GRIN2D subunits. In Conus purpurascens (Purple cone), this protein is Conantokin-P.